The primary structure comprises 438 residues: Putative ZDHHC-type palmitoyltransferase 7 (438 aa).

Asn12 and Asn13 each carry an N-linked (GlcNAc...) asparagine glycan. Helical transmembrane passes span 48–68 (IFCLVHFIVYCVIIFRKGTIL) and 77–97 (YFYLIWTHCVFFFAIGTYFLI). Residues Asn119, Asn144, and Asn157 are each glycosylated (N-linked (GlcNAc...) asparagine). The disordered stretch occupies residues 183–239 (EDSINDDTITTTTTTTTTTSTSTIPEISNDDDDNNNENNNDNVNNRNNNNSNGEKED). Low complexity-rich tracts occupy residues 190 to 206 (TITTTTTTTTTTSTSTI) and 218 to 234 (NENNNDNVNNRNNNNSN). An N-linked (GlcNAc...) asparagine glycan is attached at Asn231. Residues 249-299 (YFCKKCLVDIPLRTKHCVKCNRCVLKYDHHCVFIGGCVGLNNHKNFLLFLL) enclose the DHHC domain. The next 2 membrane-spanning stretches (helical) occupy residues 294–314 (FLLFLLAESLLLLLGLRIIVT) and 330–350 (IAIIPPTLLIFGGLCMPFALF). Asn360 carries an N-linked (GlcNAc...) asparagine glycan.

Belongs to the DHHC palmitoyltransferase family.

It localises to the membrane. The catalysed reaction is L-cysteinyl-[protein] + hexadecanoyl-CoA = S-hexadecanoyl-L-cysteinyl-[protein] + CoA. This Dictyostelium discoideum (Social amoeba) protein is Putative ZDHHC-type palmitoyltransferase 7.